The sequence spans 685 residues: ATP-dependent permease MDL1 (685 aa).

A compositionally biased stretch (polar residues) spans 48-70 (FNSKSSTAPNTEANSNGSTNSQS). Residues 48–76 (FNSKSSTAPNTEANSNGSTNSQSDTKKPR) are disordered. N63 is a glycosylation site (N-linked (GlcNAc...) asparagine). Residues 96-116 (LIFFALICLVTTSATSMALPL) traverse the membrane as a helical segment. Residues 97 to 407 (IFFALICLVT…LGNFYTELMK (311 aa)) enclose the ABC transmembrane type-1 domain. The tract at residues 125–147 (TKKDDDDDKDNDNDDKDDTQPSD) is disordered. Acidic residues predominate over residues 129–141 (DDDDKDNDNDDKD). Residues 158-180 (FYSALGVLFIVSASTNFGRIYLL) form a helical membrane-spanning segment. Residue N239 is glycosylated (N-linked (GlcNAc...) asparagine). A helical membrane pass occupies residues 266–282 (LCMSLIFPPLITMSWFY). Residue N336 is glycosylated (N-linked (GlcNAc...) asparagine). 2 helical membrane-spanning segments follow: residues 353 to 373 (GFIGNVTMIGLLIMGTKLIGA) and 381 to 401 (LSSFMMYAVYTGTSVFGLGNF). An ABC transporter domain is found at 440-680 (IEFKGIDFTY…PNSQFNKLLK (241 aa)). Position 475-482 (475-482 (GPSGSGKS)) interacts with ATP. N-linked (GlcNAc...) asparagine glycans are attached at residues N553 and N576.

It belongs to the ABC transporter superfamily. ABCB family. Mitochondrial peptide exporter (TC 3.A.1.212) subfamily.

It is found in the membrane. The polypeptide is ATP-dependent permease MDL1 (MDL1) (Candida albicans (Yeast)).